The chain runs to 134 residues: MWGRRRKLRRLNDVTISTCHVSAKVGTRLVFDHDGKIIQKTPYPHPRGTTVSVKQLFSTLPVRHKEFQRNIKKKRACFPFAFCRDCQFLEGSPAMLPVQPAKLTPRSTPPHPCSLEDNVITVFSSVKNGPGSSR.

The protein belongs to the DNA mismatch repair MutL/HexB family.

The protein is Postmeiotic segregation increased 2-like protein 5 (PMS2P5) of Homo sapiens (Human).